Consider the following 867-residue polypeptide: Bifunctional cis-abienol synthase, chloroplastic (867 aa).

A chloroplast-targeting transit peptide spans 1–49 (MALPVYSLKSHIPITTIASAKMNYTPNKGMITANGRSRRIRLSPNKIVA). Lysine 270 contributes to the substrate binding site. The DXDD motif motif lies at 403 to 406 (DIDD). Lysine 490 provides a ligand contact to substrate. Positions 622, 626, 763, 764, 767, and 771 each coordinate Mg(2+). The DDXXD motif signature appears at 622-626 (DDLYD).

It belongs to the terpene synthase family. Tpsd subfamily. Requires Mg(2+) as cofactor.

It localises to the plastid. It is found in the chloroplast. It carries out the reaction 8-hydroxycopalyl diphosphate = cis-abienol + diphosphate. The catalysed reaction is (2E,6E,10E)-geranylgeranyl diphosphate + H2O = 8-hydroxycopalyl diphosphate. It participates in terpene metabolism; oleoresin biosynthesis. In terms of biological role, involved in the biosynthesis of cis-abienol, a labdane diterpene that can be used as synthesis precursor of ambergris substitution fragance products. Bifunctional class I/II enzyme in which both the bicyclization and water capture occur in the class II active site, resulting in an intermediary labda-13-en-8-ol diphosphate, which undergoes cleavage of the diphosphate group and final deprotonation at the class I active site. No activity with copalyl diphosphate as substrate. This is Bifunctional cis-abienol synthase, chloroplastic (CAS) from Abies balsamea (Balsam fir).